The following is a 326-amino-acid chain: Metal-binding protein YtgA (326 aa).

Residues methionine 1 to glycine 21 form the signal peptide. Histidine 75, histidine 141, histidine 207, and aspartate 299 together coordinate Fe(2+).

The protein belongs to the bacterial solute-binding protein 9 family. Monomer.

It localises to the periplasm. Part of the ATP-binding cassette (ABC) transport system YtgABCD involved in metal import. Binds Fe(2+), Mn(2+) and Ni(2+), with a preference for Fe(2+) and delivers them to the membrane permease for translocation into the cytoplasm. In Chlamydia muridarum (strain MoPn / Nigg), this protein is Metal-binding protein YtgA.